The chain runs to 193 residues: Ion-translocating oxidoreductase complex subunit A (193 aa).

The next 6 membrane-spanning stretches (helical) occupy residues 5–25 (LLLF…FLGL), 47–67 (FVMT…LIPL), 72–92 (LRTL…EMVV), 102–122 (LLGI…VALL), 134–154 (ALYG…FAAI), and 171–191 (AIAL…SGLV).

This sequence belongs to the NqrDE/RnfAE family. The complex is composed of six subunits: RsxA, RsxB, RsxC, RsxD, RsxE and RsxG.

The protein resides in the cell inner membrane. Its function is as follows. Part of a membrane-bound complex that couples electron transfer with translocation of ions across the membrane. Required to maintain the reduced state of SoxR. This chain is Ion-translocating oxidoreductase complex subunit A, found in Salmonella agona (strain SL483).